We begin with the raw amino-acid sequence, 247 residues long: Pyridoxine 5'-phosphate synthase (247 aa).

Asparagine 9 is a binding site for 3-amino-2-oxopropyl phosphate. 11–12 serves as a coordination point for 1-deoxy-D-xylulose 5-phosphate; sequence DH. Residue arginine 20 participates in 3-amino-2-oxopropyl phosphate binding. The active-site Proton acceptor is histidine 45. 1-deoxy-D-xylulose 5-phosphate-binding residues include arginine 47 and histidine 52. Residue glutamate 72 is the Proton acceptor of the active site. Threonine 102 contacts 1-deoxy-D-xylulose 5-phosphate. The Proton donor role is filled by histidine 193. 3-amino-2-oxopropyl phosphate-binding positions include glycine 194 and 215 to 216; that span reads GH.

It belongs to the PNP synthase family. As to quaternary structure, homooctamer; tetramer of dimers.

It is found in the cytoplasm. It carries out the reaction 3-amino-2-oxopropyl phosphate + 1-deoxy-D-xylulose 5-phosphate = pyridoxine 5'-phosphate + phosphate + 2 H2O + H(+). Its pathway is cofactor biosynthesis; pyridoxine 5'-phosphate biosynthesis; pyridoxine 5'-phosphate from D-erythrose 4-phosphate: step 5/5. Its function is as follows. Catalyzes the complicated ring closure reaction between the two acyclic compounds 1-deoxy-D-xylulose-5-phosphate (DXP) and 3-amino-2-oxopropyl phosphate (1-amino-acetone-3-phosphate or AAP) to form pyridoxine 5'-phosphate (PNP) and inorganic phosphate. The chain is Pyridoxine 5'-phosphate synthase from Blochmanniella floridana.